Reading from the N-terminus, the 62-residue chain is Calmodulin regulator protein PCP4 (62 aa).

A disordered region spans residues 1 to 39; sequence MSERQSAGATNGKDKTSGDNDGQKKVQEEFDIDMDAPET. Basic and acidic residues predominate over residues 12–28; the sequence is GKDKTSGDNDGQKKVQE. An acidic; binds calcium and is required for modulating the calcium-binding kinetics of calmodulin region spans residues 28–40; that stretch reads EEFDIDMDAPETE. Residues 39 to 62 enclose the IQ domain; sequence TERAAVAIQSQFRKFQKKKAGSQS.

Belongs to the PCP4 family. Binds to both calcium-free and calcium-bound calmodulin. The affinity for the calcium-bound form is 50-fold greater.

Its function is as follows. Functions as a modulator of calcium-binding by calmodulin. Thereby, regulates calmodulin activity and the different processes it controls. For instance, may play a role in neuronal differentiation through activation of calmodulin-dependent kinase signaling pathways. The polypeptide is Calmodulin regulator protein PCP4 (Mus musculus (Mouse)).